The chain runs to 239 residues: Ribosomal RNA small subunit methyltransferase G (239 aa).

S-adenosyl-L-methionine-binding positions include G75, L80, 126–127 (AE), and R142.

This sequence belongs to the methyltransferase superfamily. RNA methyltransferase RsmG family.

It localises to the cytoplasm. Functionally, specifically methylates the N7 position of guanine in position 518 of 16S rRNA. This Streptomyces coelicolor (strain ATCC BAA-471 / A3(2) / M145) protein is Ribosomal RNA small subunit methyltransferase G.